Here is a 330-residue protein sequence, read N- to C-terminus: DNA-directed RNA polymerase subunit alpha (330 aa).

Residues 1 to 237 form an alpha N-terminal domain (alpha-NTD) region; it reads MYTEINEMLT…RQLHAFVDMK (237 aa). Positions 251 to 330 are alpha C-terminal domain (alpha-CTD); it reads FDPVLLRSVD…ENWPPASLGE (80 aa).

The protein belongs to the RNA polymerase alpha chain family. In terms of assembly, homodimer. The RNAP catalytic core consists of 2 alpha, 1 beta, 1 beta' and 1 omega subunit. When a sigma factor is associated with the core the holoenzyme is formed, which can initiate transcription.

The enzyme catalyses RNA(n) + a ribonucleoside 5'-triphosphate = RNA(n+1) + diphosphate. Its function is as follows. DNA-dependent RNA polymerase catalyzes the transcription of DNA into RNA using the four ribonucleoside triphosphates as substrates. This Legionella pneumophila (strain Corby) protein is DNA-directed RNA polymerase subunit alpha.